A 446-amino-acid polypeptide reads, in one-letter code: MDERDMVKRVKVFASSELKLNILLCLKYREMDVNDLQGVLGGRNTTILHAIRDMTDDYLISRGRQGYRLTNLGKIRGCVLESLMGVLDDLEARPDFWLNHDISSIPPEMLERLSMLRRSEMVSTNPASPLEIHERLESLLSTSKKISAILPLLIFPKDSKVFTNALRRGSRVDLLMTEKIAGSLLDDGSISAYEVERLLKFESFRLRLIGEDLKLALFVTESFLYLGLYRHDGVYDVGTGAIYLGESAVAWGMELFEYYAQRSRELDEGDLTRVFRSSIQPEAEAPPLAGEDPGAFDVMIVEDDLGHATLIRRIFEESSPRWRVHHASQLQDALRWIEESYGRPFLVVADYLLPDGCGLDLAGKAERPLEVGFPLIILTGFGSEKIAAQAFKSGAMDYVVKEADSIQRLPEIAEEALLRWRELKRRAAGGEGHPSPQEGQGLPLKV.

Residues Asp-297–Ala-416 enclose the Response regulatory domain. Asp-350 carries the post-translational modification 4-aspartylphosphate.

Phosphorylated by FilI.

In terms of biological role, member of the two-component regulatory system FilI/FilRs, which is involved in the regulation of methanogenesis. Regulates its own expression, expression of the filI-filR2 operon, and of genes involved in methanogenesis such as acs1, acs4 and mtrABC. Acts by binding to the promoters. This is Methanogenesis regulatory protein FilR1 from Methanothrix harundinacea (strain 6Ac) (Methanosaeta harundinacea).